The chain runs to 290 residues: 4-hydroxy-tetrahydrodipicolinate synthase (290 aa).

S44 provides a ligand contact to pyruvate. Residue Y132 is the Proton donor/acceptor of the active site. Catalysis depends on K161, which acts as the Schiff-base intermediate with substrate. Pyruvate is bound at residue V202.

This sequence belongs to the DapA family. As to quaternary structure, homotetramer; dimer of dimers.

It localises to the cytoplasm. The enzyme catalyses L-aspartate 4-semialdehyde + pyruvate = (2S,4S)-4-hydroxy-2,3,4,5-tetrahydrodipicolinate + H2O + H(+). The protein operates within amino-acid biosynthesis; L-lysine biosynthesis via DAP pathway; (S)-tetrahydrodipicolinate from L-aspartate: step 3/4. Catalyzes the condensation of (S)-aspartate-beta-semialdehyde [(S)-ASA] and pyruvate to 4-hydroxy-tetrahydrodipicolinate (HTPA). This chain is 4-hydroxy-tetrahydrodipicolinate synthase, found in Hydrogenobaculum sp. (strain Y04AAS1).